A 281-amino-acid chain; its full sequence is UPF0500 protein C1orf216 homolog (281 aa).

The span at 1–12 (MFTIQKPDTVSH) shows a compositional bias: polar residues. A disordered region spans residues 1-197 (MFTIQKPDTV…SSSDSDSISV (197 aa)). The span at 45 to 74 (TYDKNENWSQDKKGGEEGENKSKSEDEHSS) shows a compositional bias: basic and acidic residues. Low complexity-rich tracts occupy residues 92 to 102 (STGSEGISLSS), 147 to 161 (SSSLSIDSPDSVSAS), and 169 to 178 (PAPTTTPQEN). The span at 179-190 (PETEDSDVESSS) shows a compositional bias: acidic residues. A coiled-coil region spans residues 198-257 (TLSEAFQSLQDKEKLKEREKEKHHAQLTMYRRLALLRWIRALQQKVRDQQNRLQESFDTI).

Belongs to the UPF0500 family.

The protein is UPF0500 protein C1orf216 homolog of Xenopus laevis (African clawed frog).